We begin with the raw amino-acid sequence, 59 residues long: VPTQRLCGSHLVDALYFVCGERGFFYSPKPIRELEPLLGIVEQCCHNTCSLANLEGYCN.

3 cysteine pairs are disulfide-bonded: Cys7–Cys45, Cys19–Cys58, and Cys44–Cys49.

The protein belongs to the insulin family. In terms of assembly, heterodimer of a B chain and an A chain linked by two disulfide bonds.

The protein resides in the secreted. Insulin decreases blood glucose concentration. It increases cell permeability to monosaccharides, amino acids and fatty acids. It accelerates glycolysis, the pentose phosphate cycle, and glycogen synthesis in liver. The polypeptide is Insulin (ins) (Chimaera monstrosa (Rabbit fish)).